The sequence spans 546 residues: Pyrophosphate--fructose 6-phosphate 1-phosphotransferase (546 aa).

Gly-80 is a diphosphate binding site. Asp-174 lines the Mg(2+) pocket. Residues 202 to 204 (TID), 241 to 242 (KY), 249 to 251 (MGR), Glu-310, and 420 to 423 (YEGR) each bind substrate. Asp-204 (proton acceptor) is an active-site residue.

This sequence belongs to the phosphofructokinase type A (PFKA) family. PPi-dependent PFK group II subfamily. Clade 'Long' sub-subfamily. As to quaternary structure, homodimer. Requires Mg(2+) as cofactor. Mn(2+) is required as a cofactor.

The protein resides in the cytoplasm. The catalysed reaction is beta-D-fructose 6-phosphate + diphosphate = beta-D-fructose 1,6-bisphosphate + phosphate + H(+). It functions in the pathway carbohydrate degradation; glycolysis; D-glyceraldehyde 3-phosphate and glycerone phosphate from D-glucose: step 3/4. Non-allosteric. Competitively inhibited by PPi, Pi and fructose 1,6-bisphosphate. In terms of biological role, catalyzes the phosphorylation of D-fructose 6-phosphate, the first committing step of glycolysis. Uses inorganic phosphate (PPi) as phosphoryl donor instead of ATP like common ATP-dependent phosphofructokinases (ATP-PFKs), which renders the reaction reversible, and can thus function both in glycolysis and gluconeogenesis. Consistently, PPi-PFK can replace the enzymes of both the forward (ATP-PFK) and reverse (fructose-bisphosphatase (FBPase)) reactions. This chain is Pyrophosphate--fructose 6-phosphate 1-phosphotransferase, found in Entamoeba histolytica (strain ATCC 30459 / HM-1:IMSS / ABRM).